A 314-amino-acid chain; its full sequence is DNA-directed RNA polymerase subunit alpha (314 aa).

Residues Met-1–Thr-228 form an alpha N-terminal domain (alpha-NTD) region. The interval Lys-245 to Glu-314 is alpha C-terminal domain (alpha-CTD).

The protein belongs to the RNA polymerase alpha chain family. Homodimer. The RNAP catalytic core consists of 2 alpha, 1 beta, 1 beta' and 1 omega subunit. When a sigma factor is associated with the core the holoenzyme is formed, which can initiate transcription.

The catalysed reaction is RNA(n) + a ribonucleoside 5'-triphosphate = RNA(n+1) + diphosphate. Its function is as follows. DNA-dependent RNA polymerase catalyzes the transcription of DNA into RNA using the four ribonucleoside triphosphates as substrates. This Halalkalibacterium halodurans (strain ATCC BAA-125 / DSM 18197 / FERM 7344 / JCM 9153 / C-125) (Bacillus halodurans) protein is DNA-directed RNA polymerase subunit alpha.